The sequence spans 133 residues: Large ribosomal subunit protein eL32z (133 aa).

Belongs to the eukaryotic ribosomal protein eL32 family.

The polypeptide is Large ribosomal subunit protein eL32z (RPL32A) (Arabidopsis thaliana (Mouse-ear cress)).